Reading from the N-terminus, the 251-residue chain is 2,3-bisphosphoglycerate-dependent phosphoglycerate mutase (251 aa).

Residues 11 to 18 (RHGESDWN), 24 to 25 (TG), R63, 90 to 93 (ERHY), K101, 117 to 118 (RR), and 184 to 185 (GN) each bind substrate. Residue H12 is the Tele-phosphohistidine intermediate of the active site. E90 functions as the Proton donor/acceptor in the catalytic mechanism.

Belongs to the phosphoglycerate mutase family. BPG-dependent PGAM subfamily.

The enzyme catalyses (2R)-2-phosphoglycerate = (2R)-3-phosphoglycerate. It participates in carbohydrate degradation; glycolysis; pyruvate from D-glyceraldehyde 3-phosphate: step 3/5. Functionally, catalyzes the interconversion of 2-phosphoglycerate and 3-phosphoglycerate. The sequence is that of 2,3-bisphosphoglycerate-dependent phosphoglycerate mutase from Mycobacterium marinum (strain ATCC BAA-535 / M).